Consider the following 348-residue polypeptide: MKFLDQAKIYVRSGNGGAGCVSFRREKFIEFGGPDGGDGGRGGDVIVECVEGLNTLIDYRFQQHFRAKTGTHGMGKNRAGANGADVVLKVPVGTQIFEEDEETLIADMTEVGQRIVLLKGGNGGFGNAYFKSSTNQAPRRANPGLEGQEKTIILRLKLIADAGLVGLPNAGKSTFLAAVSAAKPKIADYPFTTLTPGLGVVTIDTRSFVLADIPGLIEGAHEGAGLGDRFLGHLERCSILIHLVDGTAEDVAEAYHIIRGEIEAYGAGLEDKPEILCLNKMDALSEEEREEKLALLAEESGSEVRLLSGVSGEGVKEVLRLAADEIWKTRAMEKAEAATGEEEEGWKP.

Positions 1–159 (MKFLDQAKIY…KTIILRLKLI (159 aa)) constitute an Obg domain. The 168-residue stretch at 160-327 (ADAGLVGLPN…VLRLAADEIW (168 aa)) folds into the OBG-type G domain. GTP-binding positions include 166-173 (GLPNAGKS), 191-195 (FTTLT), 212-215 (DIPG), 279-282 (NKMD), and 308-310 (SGV). 2 residues coordinate Mg(2+): Ser173 and Thr193.

The protein belongs to the TRAFAC class OBG-HflX-like GTPase superfamily. OBG GTPase family. In terms of assembly, monomer. Mg(2+) serves as cofactor.

Its subcellular location is the cytoplasm. Functionally, an essential GTPase which binds GTP, GDP and possibly (p)ppGpp with moderate affinity, with high nucleotide exchange rates and a fairly low GTP hydrolysis rate. Plays a role in control of the cell cycle, stress response, ribosome biogenesis and in those bacteria that undergo differentiation, in morphogenesis control. The polypeptide is GTPase Obg (Parvibaculum lavamentivorans (strain DS-1 / DSM 13023 / NCIMB 13966)).